Consider the following 205-residue polypeptide: High frequency lysogenization protein HflD homolog (205 aa).

Belongs to the HflD family.

The protein localises to the cytoplasm. It is found in the cell inner membrane. The sequence is that of High frequency lysogenization protein HflD homolog from Shewanella sp. (strain ANA-3).